The chain runs to 147 residues: Helix-loop-helix protein 13 (147 aa).

Residues 41–93 enclose the bHLH domain; the sequence is EERQTASIRERKRMCSINVAFIELRNYIPTFPYEKRLSKIDTLNLAIAYINML.

Expressed in hermaphrodite dopaminergic neurons (ADE, CEP, and PDE).

The protein resides in the nucleus. Its subcellular location is the cytoplasm. In terms of biological role, transcriptional activator. Shown to have a role in the negative regulation of exit from L1 arrest and dauer diapause dependent on IIS signaling (insulin and insulin-like growth factor (IGF) signaling). Hypodermal expression is regulated by IIS/daf-16 while neuronal expression is not under the control of IIS/daf-16. In Caenorhabditis elegans, this protein is Helix-loop-helix protein 13.